Reading from the N-terminus, the 160-residue chain is H/ACA ribonucleoprotein complex subunit 2-like protein (160 aa).

The protein belongs to the eukaryotic ribosomal protein eL8 family. As to quaternary structure, component of the small nucleolar ribonucleoprotein particle containing H/ACA-type snoRNAs (H/ACA snoRNPs).

Its subcellular location is the nucleus. The protein localises to the nucleolus. Required for ribosome biogenesis. Part of a complex which catalyzes pseudouridylation of rRNA. This involves the isomerization of uridine such that the ribose is subsequently attached to C5, instead of the normal N1. Pseudouridine ('psi') residues may serve to stabilize the conformation of rRNAs. In Drosophila yakuba (Fruit fly), this protein is H/ACA ribonucleoprotein complex subunit 2-like protein (NHP2).